We begin with the raw amino-acid sequence, 460 residues long: Omega-3 fatty acid desaturase, chloroplastic (460 aa).

A Histidine box-1 motif is present at residues 177–181; the sequence is HDCGH. A Histidine box-2 motif is present at residues 213–217; it reads HRTHH. Positions 380 to 384 match the Histidine box-3 motif; it reads HVIHH.

This sequence belongs to the fatty acid desaturase type 1 family.

It localises to the plastid. It is found in the chloroplast membrane. It functions in the pathway lipid metabolism; polyunsaturated fatty acid biosynthesis. Chloroplast omega-3 fatty acid desaturase introduces the third double bond in the biosynthesis of 16:3 and 18:3 fatty acids, important constituents of plant membranes. It is thought to use ferredoxin as an electron donor and to act on fatty acids esterified to galactolipids, sulfolipids and phosphatidylglycerol. The chain is Omega-3 fatty acid desaturase, chloroplastic (FAD7A-1) from Ricinus communis (Castor bean).